Reading from the N-terminus, the 308-residue chain is Endonuclease G, mitochondrial (308 aa).

H148 serves as the catalytic Proton acceptor. N180 lines the Mg(2+) pocket.

This sequence belongs to the DNA/RNA non-specific endonuclease family. As to quaternary structure, homodimer; disulfide-linked. Interacts with crn-5, crn-4, crn-1 and cyn-13. The cofactor is Mg(2+).

The protein localises to the mitochondrion. In terms of biological role, endonuclease important for programmed cell death; it mediates apoptotic DNA fragmentation. The chain is Endonuclease G, mitochondrial (cps-6) from Caenorhabditis elegans.